The chain runs to 587 residues: Chaperonin GroEL 1 (587 aa).

ATP-binding positions include 29–32, 86–90, glycine 413, and aspartate 492; these read TIGP and DGTTT.

The protein belongs to the chaperonin (HSP60) family. As to quaternary structure, forms a cylinder of 14 subunits composed of two heptameric rings stacked back-to-back. Interacts with the co-chaperonin GroES.

The protein localises to the cytoplasm. It carries out the reaction ATP + H2O + a folded polypeptide = ADP + phosphate + an unfolded polypeptide.. Its function is as follows. Together with its co-chaperonin GroES, plays an essential role in assisting protein folding. The GroEL-GroES system forms a nano-cage that allows encapsulation of the non-native substrate proteins and provides a physical environment optimized to promote and accelerate protein folding. In Prochlorococcus marinus (strain MIT 9515), this protein is Chaperonin GroEL 1.